Consider the following 492-residue polypeptide: Glutamyl-tRNA(Gln) amidotransferase subunit A (492 aa).

Active-site charge relay system residues include Lys78 and Ser158. The active-site Acyl-ester intermediate is the Ser182.

It belongs to the amidase family. GatA subfamily. As to quaternary structure, heterotrimer of A, B and C subunits.

The enzyme catalyses L-glutamyl-tRNA(Gln) + L-glutamine + ATP + H2O = L-glutaminyl-tRNA(Gln) + L-glutamate + ADP + phosphate + H(+). In terms of biological role, allows the formation of correctly charged Gln-tRNA(Gln) through the transamidation of misacylated Glu-tRNA(Gln) in organisms which lack glutaminyl-tRNA synthetase. The reaction takes place in the presence of glutamine and ATP through an activated gamma-phospho-Glu-tRNA(Gln). This Rickettsia akari (strain Hartford) protein is Glutamyl-tRNA(Gln) amidotransferase subunit A.